An 887-amino-acid polypeptide reads, in one-letter code: Exosome complex component 10 (887 aa).

Basic and acidic residues predominate over residues 1–10 (MAPPSPREHQ). The interval 1–23 (MAPPSPREHQSAPATSATKPDAE) is disordered. Lysine 19 is covalently cross-linked (Glycyl lysine isopeptide (Lys-Gly) (interchain with G-Cter in SUMO2)). Residues 289-455 (HLVSSLDELV…YIYDRMRLEL (167 aa)) form the 3'-5' exonuclease domain. Positions 313, 315, 371, and 440 each coordinate Mg(2+). The 81-residue stretch at 503 to 583 (NSQQLTAFQL…QQAREMPLLK (81 aa)) folds into the HRDC domain. Lysine 583 is covalently cross-linked (Glycyl lysine isopeptide (Lys-Gly) (interchain with G-Cter in SUMO1); alternate). Lysine 583 participates in a covalent cross-link: Glycyl lysine isopeptide (Lys-Gly) (interchain with G-Cter in SUMO2); alternate. Lysine 710 is covalently cross-linked (Glycyl lysine isopeptide (Lys-Gly) (interchain with G-Cter in SUMO2)). Disordered regions lie at residues 734–757 (KEPK…AKEE) and 777–887 (NATK…WPKR). The span at 778–796 (ATKKRERATSDLRTIEQKQ) shows a compositional bias: basic and acidic residues. The residue at position 823 (serine 823) is a Phosphoserine. Glycyl lysine isopeptide (Lys-Gly) (interchain with G-Cter in SUMO2) cross-links involve residues lysine 835, lysine 861, and lysine 875.

It belongs to the exosome component 10/RRP6 family. Component of the RNA exosome complex. The catalytically inactive RNA exosome core complex (Exo-9) associates with the catalytic subunit EXOSC10/RRP6 (via its N-terminus). Exo-9 may associate with DIS3 to form the nucleolar exosome complex, or DIS3L to form the cytoplasmic exosome complex. The RNA exosome complex interacts with cofactors C1D/RRP47, MPHOSPH6/MPP6 and MTREX/MTR4. Interacts with MTREX; the interaction with MTREX mediates the association of MTREX with nuclear RNA exosomes. Part of the small subunit (SSU) processome, composed of more than 70 proteins and the RNA chaperone small nucleolar RNA (snoRNA) U3. Interacts with ALYREF/THOC4. Interacts with DHX36; this interaction occurs in a RNase-insensitive manner. Interacts with NRDE2. Interacts (via C-terminus) with USP36 (via C-terminus); the interaction is facilitated by the association with RNA and promotes sumoylation of EXOSC10. The cofactor is Mg(2+). In terms of processing, sumoylated by USP36; sumoylation does not significantly affect EXOSC10 nucleolar localization and association with core exosome and USP36, but regulates the nucleolar RNA exosome activity in rRNA processing by promoting binding of EXOSC10 to pre-rRNAs. Effects of sumoylation on EXOSC10 levels vary between different studies. Sumoylation of EXOSC10 is required for the modulation of EXOSC10 effects on cellular protein translation and cell proliferation. Sumoylation is promoted by mild hypothermia. In terms of tissue distribution, expressed in ovary (at protein level). Expressed in testis (at protein level). Expressed in lung (at protein level).

The protein resides in the cytoplasm. It is found in the nucleus. It localises to the nucleolus. Its subcellular location is the nucleoplasm. Functionally, catalytic component of the RNA exosome complex which has 3'-&gt;5' exoribonuclease activity and participates in a multitude of cellular RNA processing and degradation events. In the nucleus, the RNA exosome complex is involved in proper maturation of stable RNA species such as rRNA, snRNA and snoRNA, in the elimination of RNA processing by-products and non-coding 'pervasive' transcripts, such as antisense RNA species and promoter-upstream transcripts (PROMPTs), and of mRNAs with processing defects, thereby limiting or excluding their export to the cytoplasm. Part of the small subunit (SSU) processome, first precursor of the small eukaryotic ribosomal subunit. During the assembly of the SSU processome in the nucleolus, many ribosome biogenesis factors, an RNA chaperone and ribosomal proteins associate with the nascent pre-rRNA and work in concert to generate RNA folding, modifications, rearrangements and cleavage as well as targeted degradation of pre-ribosomal RNA by the RNA exosome. The RNA exosome may be involved in Ig class switch recombination (CSR) and/or Ig variable region somatic hypermutation (SHM) by targeting AICDA deamination activity to transcribed dsDNA substrates. In the cytoplasm, the RNA exosome complex is involved in general mRNA turnover and specifically degrades inherently unstable mRNAs containing AU-rich elements (AREs) within their 3' untranslated regions, and in RNA surveillance pathways, preventing translation of aberrant mRNAs. It seems to be involved in degradation of histone mRNA. EXOSC10 is required for nucleolar localization of C1D and probably mediates the association of MTREX, C1D and MPHOSPH6 with the RNA exosome involved in the maturation of 5.8S rRNA. Plays a role in the recruitment of replication protein A complex (RPA) and RAD51 to DNA double-strand breaks caused by irradiation, contributing to DNA repair by homologous recombination. Regulates levels of damage-induced RNAs in order to prevent DNA-RNA hybrid formation at DNA double-strand breaks and limit DNA end resection after damage. Plays a role in oocyte development, maturation and survival. Required for normal testis development and mitotic division of spermatogonia. Plays a role in proper embryo development. Required for global protein translation. Required for cell proliferation. In Mus musculus (Mouse), this protein is Exosome complex component 10 (Exosc10).